The following is a 326-amino-acid chain: Olfactory receptor 10X1 (326 aa).

The Extracellular portion of the chain corresponds to M1 to T41. A glycan (N-linked (GlcNAc...) asparagine) is linked at N21. The chain crosses the membrane as a helical span at residues F42–M62. Residues G63–S70 are Cytoplasmic-facing. The helical transmembrane segment at L71–L91 threads the bilayer. The Extracellular portion of the chain corresponds to T92–L115. C113 and C205 are joined by a disulfide. The helical transmembrane segment at Q116–Y136 threads the bilayer. Residues D137–I155 are Cytoplasmic-facing. A helical membrane pass occupies residues V156–T176. The Extracellular segment spans residues A177–F213. N-linked (GlcNAc...) asparagine glycosylation is present at N209. A helical transmembrane segment spans residues I214–T233. The Cytoplasmic segment spans residues D234 to A253. The chain crosses the membrane as a helical span at residues F254–V274. The Extracellular portion of the chain corresponds to Y275–D284. A helical membrane pass occupies residues T285 to L305. The Cytoplasmic portion of the chain corresponds to R306–K326.

Belongs to the G-protein coupled receptor 1 family.

It is found in the cell membrane. Its function is as follows. Odorant receptor. The chain is Olfactory receptor 10X1 (OR10X1) from Homo sapiens (Human).